A 272-amino-acid polypeptide reads, in one-letter code: NADPH-dependent 7-cyano-7-deazaguanine reductase (272 aa).

82 to 84 (IES) serves as a coordination point for substrate. 84 to 85 (SK) provides a ligand contact to NADPH. The active-site Thioimide intermediate is the Cys178. Asp185 (proton donor) is an active-site residue. Residue 217–218 (HE) participates in substrate binding. 246-247 (RG) lines the NADPH pocket.

The protein belongs to the GTP cyclohydrolase I family. QueF type 2 subfamily. As to quaternary structure, homodimer.

It localises to the cytoplasm. It carries out the reaction 7-aminomethyl-7-carbaguanine + 2 NADP(+) = 7-cyano-7-deazaguanine + 2 NADPH + 3 H(+). It functions in the pathway tRNA modification; tRNA-queuosine biosynthesis. In terms of biological role, catalyzes the NADPH-dependent reduction of 7-cyano-7-deazaguanine (preQ0) to 7-aminomethyl-7-deazaguanine (preQ1). The sequence is that of NADPH-dependent 7-cyano-7-deazaguanine reductase from Stenotrophomonas maltophilia (strain R551-3).